The primary structure comprises 160 residues: Small ribosomal subunit protein uS7A (160 aa).

It belongs to the universal ribosomal protein uS7 family. Part of the 30S ribosomal subunit. Contacts proteins S9 and S11.

In terms of biological role, one of the primary rRNA binding proteins, it binds directly to 16S rRNA where it nucleates assembly of the head domain of the 30S subunit. Is located at the subunit interface close to the decoding center, probably blocks exit of the E-site tRNA. This chain is Small ribosomal subunit protein uS7A, found in Aquifex aeolicus (strain VF5).